Reading from the N-terminus, the 594-residue chain is UV-stimulated scaffold protein A homolog (594 aa).

Residues 24–170 (RKNLNRFIRE…VTLKKTKFVD (147 aa)) form a VHS-like region. Residues 170-198 (DYENGAKKIEAERKRKKILEERKMKMIEN) adopt a coiled-coil conformation. The UVSSA-type zinc-finger motif lies at 466–493 (RKVCLAKMKSGKLCPRKDYYTCPLHGKI). C469, C479, C487, and H490 together coordinate Zn(2+). A coiled-coil region spans residues 503–540 (INEEDRLEENYRKEQNHLKEADKIRQMIEKEYESKTKR). Residues 533-558 (EYESKTKRRKKHDVDTTASEDVRNRL) form a disordered region. Basic and acidic residues predominate over residues 544–558 (HDVDTTASEDVRNRL).

Belongs to the UVSSA family.

The protein localises to the chromosome. Functionally, factor involved in transcription-coupled nucleotide excision repair (TC-NER) in response to UV damage. TC-NER allows RNA polymerase II-blocking lesions to be rapidly removed from the transcribed strand of active genes. The polypeptide is UV-stimulated scaffold protein A homolog (Caenorhabditis elegans).